A 309-amino-acid chain; its full sequence is MAAQVRVLRQRIRAAKSMKKITKAMELVATSRIAKAQEQVAASLPYSRAITEVLTALASNTRIDHPLLTPRERVRRAGVLLVTSDRGLAGGYSSNAIKTAESLLARLRADGKEPSLYVIGRKGVQYYRFRNRPMMACWTGFSEQPTFADAREVGETLIKAFTAGVDDGDGDPGPDGVFGVDELHIVSTEFKSLMTQVPVPKILGPMQIEDRPRSEGILPAYEFEPEAEALLDALLPKYINTRIYAALVESAASESASRRRAMKSATDNAEEMIEKYTREMNSARQAGITQEISEIVGGANALAASGSEV.

Belongs to the ATPase gamma chain family. In terms of assembly, F-type ATPases have 2 components, CF(1) - the catalytic core - and CF(0) - the membrane proton channel. CF(1) has five subunits: alpha(3), beta(3), gamma(1), delta(1), epsilon(1). CF(0) has three main subunits: a, b and c.

The protein resides in the cell membrane. Its function is as follows. Produces ATP from ADP in the presence of a proton gradient across the membrane. The gamma chain is believed to be important in regulating ATPase activity and the flow of protons through the CF(0) complex. This is ATP synthase gamma chain from Salinispora tropica (strain ATCC BAA-916 / DSM 44818 / JCM 13857 / NBRC 105044 / CNB-440).